Consider the following 3848-residue polypeptide: Intermembrane lipid transfer protein tipC (3848 aa).

One can recognise a Chorein N-terminal domain in the interval 4–112 (HIAASVLTKY…KFQDEKQAKL (109 aa)). Disordered regions lie at residues 243 to 268 (IKKEDSGKQQQQQQQQQGEEQDDEIE), 450 to 481 (LKLQQQQQQQQQNLNKISPTTTTTPSTSTGGG), 966 to 985 (QQLQPQQKQQSPPLISSPPL), 1174 to 1219 (KNNQ…NNNS), 1326 to 1345 (ERKLNNKTSPTTPSSSGVST), 1907 to 1926 (ENINNNNNNNLTTSTTTTTT), 2024 to 2047 (DDYNDDNYNSNGNNNNNNSNNQLP), 2209 to 2290 (IKPA…NKNL), 2330 to 2353 (FNPKFSSSSSSSQQQQQQPLSPLL), 2509 to 2541 (KQLNNQLQQQSNNNNNNNNNNNNTNSNNSNLLG), 3209 to 3228 (GITNDPNNPNNPNNNPNNND), and 3310 to 3342 (INQQPNQQSSSPQSTNTTTTTTTNTTTTNNTTQ). Low complexity-rich tracts occupy residues 251 to 260 (QQQQQQQQQG) and 452 to 477 (LQQQQQQQQQNLNKISPTTTTTPSTS). Low complexity predominate over residues 1175–1190 (NNQNNNQNNNQNNNQN). The span at 1191–1200 (INESSPTVFI) shows a compositional bias: polar residues. The span at 1202-1211 (SPPPPPPPPL) shows a compositional bias: pro residues. Over residues 1333–1345 (TSPTTPSSSGVST) the composition is skewed to low complexity. Low complexity-rich tracts occupy residues 2029–2044 (DNYNSNGNNNNNNSNN), 2217–2289 (NNNN…NNKN), and 2335–2353 (SSSSSSSQQQQQQPLSPLL). Low complexity-rich tracts occupy residues 3212 to 3228 (NDPNNPNNPNNNPNNND) and 3311 to 3342 (NQQPNQQSSSPQSTNTTTTTTTNTTTTNNTTQ).

It belongs to the VPS13 family.

Its subcellular location is the membrane. Functionally, mediates the transfer of lipids between membranes at organelle contact sites. This is Intermembrane lipid transfer protein tipC (tipC) from Dictyostelium discoideum (Social amoeba).